Here is a 101-residue protein sequence, read N- to C-terminus: Large ribosomal subunit protein eL30 (101 aa).

This sequence belongs to the eukaryotic ribosomal protein eL30 family.

The chain is Large ribosomal subunit protein eL30 from Pyrobaculum islandicum (strain DSM 4184 / JCM 9189 / GEO3).